Here is a 252-residue protein sequence, read N- to C-terminus: Aspartate/glutamate leucyltransferase (252 aa).

The protein belongs to the R-transferase family. Bpt subfamily.

Its subcellular location is the cytoplasm. The enzyme catalyses N-terminal L-glutamyl-[protein] + L-leucyl-tRNA(Leu) = N-terminal L-leucyl-L-glutamyl-[protein] + tRNA(Leu) + H(+). The catalysed reaction is N-terminal L-aspartyl-[protein] + L-leucyl-tRNA(Leu) = N-terminal L-leucyl-L-aspartyl-[protein] + tRNA(Leu) + H(+). In terms of biological role, functions in the N-end rule pathway of protein degradation where it conjugates Leu from its aminoacyl-tRNA to the N-termini of proteins containing an N-terminal aspartate or glutamate. The polypeptide is Aspartate/glutamate leucyltransferase (Xanthomonas campestris pv. campestris (strain B100)).